Reading from the N-terminus, the 106-residue chain is Secreted RxLR effector protein 18 (106 aa).

The N-terminal stretch at 1 to 17 (MRGSTAMLLAAIALFSS) is a signal peptide. The short motif at 28-39 (RTLRSFEELEER) is the RxLR-dEER element.

Belongs to the RxLR effector family.

It localises to the secreted. The protein localises to the host cell. Effector that may act as a suppressor of cell death to interrupt plant immunity. I. The sequence is that of Secreted RxLR effector protein 18 from Plasmopara viticola (Downy mildew of grapevine).